The following is a 414-amino-acid chain: O-methyltransferase sirM (414 aa).

D270 contacts S-adenosyl-L-methionine. The active-site Proton acceptor is H321.

The protein belongs to the class I-like SAM-binding methyltransferase superfamily. Cation-independent O-methyltransferase family. COMT subfamily.

The protein operates within mycotoxin biosynthesis. Its function is as follows. O-methyltransferase; part of the gene cluster that mediates the biosynthesis of sirodesmin PL, an epipolythiodioxopiperazine (ETP) characterized by a disulfide bridged cyclic dipeptide and that acts as a phytotoxin which is involved in the blackleg didease of canola. SirD catalyzes the O-prenylation of L-tyrosine (L-Tyr) in the presence of dimethylallyl diphosphate (DMAPP) to yield 4-O-dimethylallyl-L-Tyr, and therefore represents probably the first pathway-specific enzyme in the biosynthesis of sirodesmin PL. 4-O-dimethylallyl-L-Tyr, then undergoes condensation with L-Ser in a reaction catalyzed by the non-ribosomal peptide synthase sirP to form the diketopiperazine (DKP) backbone. Further bishydroxylation of the DKP performed by the cytochrome P450 monooxygenase sirC leads to the production of the intermediate phomamide. This step is essential to form the reactive thiol group required for toxicity of sirodesmin PL. The next steps of sirodesmin biosynthesis are not well understood yet, but some predictions could be made from intermediate compounds identification. Phomamide is converted into phomalizarine via oxidation, probably by sirT. Further oxidation, methylation (by sirM or sirN) and reduction steps convert phomalizarine to deacetyl sirodesmin. Finally, acetyltransferase sirH probably acetylates deacetyl sirodesmin to produce sirodesmin PL. This Leptosphaeria maculans (Blackleg fungus) protein is O-methyltransferase sirM.